A 205-amino-acid chain; its full sequence is Urease accessory protein UreG (205 aa).

11-18 contributes to the GTP binding site; sequence GPVGSGKT.

This sequence belongs to the SIMIBI class G3E GTPase family. UreG subfamily. As to quaternary structure, homodimer. UreD, UreF and UreG form a complex that acts as a GTP-hydrolysis-dependent molecular chaperone, activating the urease apoprotein by helping to assemble the nickel containing metallocenter of UreC. The UreE protein probably delivers the nickel.

The protein localises to the cytoplasm. Its function is as follows. Facilitates the functional incorporation of the urease nickel metallocenter. This process requires GTP hydrolysis, probably effectuated by UreG. This chain is Urease accessory protein UreG, found in Prochlorococcus marinus (strain NATL2A).